Reading from the N-terminus, the 149-residue chain is MLDPTEKVIDSESMESKLTSVDAIEEHSSSSSNEAISNEKKSCAICGTSKTPLWRGGPAGPKSLCNACGIRNRKKRRTLISNRSEDKKKKSHNRNPKFGDSLKQRLMELGREVMMQRSTAENQRRNKLGEEEQAAVLLMALSYASSVYA.

Over residues 1–10 (MLDPTEKVID) the composition is skewed to basic and acidic residues. Disordered regions lie at residues 1–41 (MLDP…NEKK) and 76–102 (RRTLISNRSEDKKKKSHNRNPKFGDSL). The GATA-type zinc-finger motif lies at 37–91 (SNEKKSCAICGTSKTPLWRGGPAGPKSLCNACGIRNRKKRRTLISNRSEDKKKKS).

Belongs to the type IV zinc-finger family. Class B subfamily.

It is found in the nucleus. In terms of biological role, transcriptional regulator that specifically binds 5'-GATA-3' or 5'-GAT-3' motifs within gene promoters. The protein is GATA transcription factor 15 (GATA15) of Arabidopsis thaliana (Mouse-ear cress).